The following is a 58-amino-acid chain: uncharacterized protein (58 aa).

Residues 18-38 (WLMIVLLFCSTGMVFLATILE) form a helical membrane-spanning segment.

It is found in the membrane. This is an uncharacterized protein from Saccharomyces cerevisiae (strain ATCC 204508 / S288c) (Baker's yeast).